Reading from the N-terminus, the 122-residue chain is uncharacterized protein (122 aa).

The N-terminal stretch at 1–18 (MYSMAFLASSGLVANSSA) is a signal peptide. N-linked (GlcNAc...) asparagine glycosylation occurs at N15.

This is an uncharacterized protein from Saccharomyces cerevisiae (strain ATCC 204508 / S288c) (Baker's yeast).